A 201-amino-acid chain; its full sequence is Two-component response regulator ORR9 (201 aa).

The Response regulatory domain maps to 10–142 (HVLAVDDSLP…DMSKLKPHIL (133 aa)). D75 carries the post-translational modification 4-aspartylphosphate. Residues 149 to 201 (HYQQEQNLQSNSESNNSSNPTSENSSSSTSSNSHKRKAVDEEILPHTIRPRHS) are disordered. Over residues 158-180 (SNSESNNSSNPTSENSSSSTSSN) the composition is skewed to low complexity.

This sequence belongs to the ARR family. Type-A subfamily. In terms of processing, two-component system major event consists of a His-to-Asp phosphorelay between a sensor histidine kinase (HK) and a response regulator (RR). In plants, the His-to-Asp phosphorelay involves an additional intermediate named Histidine-containing phosphotransfer protein (HPt). This multistep phosphorelay consists of a His-Asp-His-Asp sequential transfer of a phosphate group between first a His and an Asp of the HK protein, followed by the transfer to a conserved His of the HPt protein and finally the transfer to an Asp in the receiver domain of the RR protein.

Its function is as follows. Functions as a response regulator involved in His-to-Asp phosphorelay signal transduction system. Phosphorylation of the Asp residue in the receiver domain activates the ability of the protein to promote the transcription of target genes. Type-A response regulators seem to act as negative regulators of the cytokinin signaling. The protein is Two-component response regulator ORR9 of Oryza sativa subsp. japonica (Rice).